We begin with the raw amino-acid sequence, 66 residues long: Delta-buthitoxin-Hj1a (66 aa).

One can recognise an LCN-type CS-alpha/beta domain in the interval 4–66 (RDAYIAQPHN…EPIKVPGKCH (63 aa)). Disulfide bonds link C14/C65, C18/C38, C24/C48, and C28/C50.

The protein belongs to the long (4 C-C) scorpion toxin superfamily. Sodium channel inhibitor family. Alpha subfamily. Expressed by the venom gland.

It is found in the secreted. In terms of biological role, this recombinant toxin slows fast inactivation on Nav1.1/SCN1A (EC(50)=17 nM), Nav1.4/SN4A (EC(50)=7.5 nM), Nav1.5/SCN5A (EC(50)=9.2 nM) and Nav1.6/SCN8A (EC(50)=37.3 nM) voltage-gated sodium channels. On Nav1.1/SCN1A channel, it acts as an agonist by inducing a shift in both the voltage dependence of channel inactivation (alpha-toxin activity) and activation (beta-toxin activity). In vivo, shows moderate insecticidal activities. It induces irreversible paralysis in blowflies and lethal effects in D.melanogaster. In Hottentotta judaicus (Black scorpion), this protein is Delta-buthitoxin-Hj1a.